A 361-amino-acid chain; its full sequence is tRNA/tmRNA (uracil-C(5))-methyltransferase (361 aa).

Q185, Y213, N218, E234, and D294 together coordinate S-adenosyl-L-methionine. C319 serves as the catalytic Nucleophile. The active-site Proton acceptor is the E353.

This sequence belongs to the class I-like SAM-binding methyltransferase superfamily. RNA M5U methyltransferase family. TrmA subfamily.

The enzyme catalyses uridine(54) in tRNA + S-adenosyl-L-methionine = 5-methyluridine(54) in tRNA + S-adenosyl-L-homocysteine + H(+). The catalysed reaction is uridine(341) in tmRNA + S-adenosyl-L-methionine = 5-methyluridine(341) in tmRNA + S-adenosyl-L-homocysteine + H(+). In terms of biological role, dual-specificity methyltransferase that catalyzes the formation of 5-methyluridine at position 54 (m5U54) in all tRNAs, and that of position 341 (m5U341) in tmRNA (transfer-mRNA). The chain is tRNA/tmRNA (uracil-C(5))-methyltransferase from Pseudomonas syringae pv. syringae (strain B728a).